The following is a 282-amino-acid chain: Biotin synthase (282 aa).

A Radical SAM core domain is found at 1–228 (MQEIFLCSIS…NARLMAAGGR (228 aa)). 3 residues coordinate [4Fe-4S] cluster: cysteine 17, cysteine 21, and cysteine 24. Residues cysteine 61, cysteine 96, cysteine 154, and arginine 221 each coordinate [2Fe-2S] cluster.

It belongs to the radical SAM superfamily. Biotin synthase family. In terms of assembly, homodimer. It depends on [4Fe-4S] cluster as a cofactor. [2Fe-2S] cluster is required as a cofactor.

The catalysed reaction is (4R,5S)-dethiobiotin + (sulfur carrier)-SH + 2 reduced [2Fe-2S]-[ferredoxin] + 2 S-adenosyl-L-methionine = (sulfur carrier)-H + biotin + 2 5'-deoxyadenosine + 2 L-methionine + 2 oxidized [2Fe-2S]-[ferredoxin]. It participates in cofactor biosynthesis; biotin biosynthesis; biotin from 7,8-diaminononanoate: step 2/2. Catalyzes the conversion of dethiobiotin (DTB) to biotin by the insertion of a sulfur atom into dethiobiotin via a radical-based mechanism. This chain is Biotin synthase, found in Helicobacter acinonychis (strain Sheeba).